Consider the following 349-residue polypeptide: Isopentenyl-diphosphate delta-isomerase (349 aa).

6 to 7 (RK) provides a ligand contact to substrate. FMN-binding positions include 62 to 64 (AMT), Ser-93, and Asn-122. Substrate is bound at residue Gln-152. Residue Glu-153 participates in Mg(2+) binding. FMN contacts are provided by residues Lys-184, Thr-214, 258–259 (GG), and 280–281 (AG).

This sequence belongs to the IPP isomerase type 2 family. As to quaternary structure, homooctamer. Dimer of tetramers. It depends on FMN as a cofactor. The cofactor is NADPH. Mg(2+) is required as a cofactor.

Its subcellular location is the cytoplasm. It catalyses the reaction isopentenyl diphosphate = dimethylallyl diphosphate. In terms of biological role, involved in the biosynthesis of isoprenoids. Catalyzes the 1,3-allylic rearrangement of the homoallylic substrate isopentenyl (IPP) to its allylic isomer, dimethylallyl diphosphate (DMAPP). This chain is Isopentenyl-diphosphate delta-isomerase, found in Bacillus cereus (strain AH820).